A 154-amino-acid chain; its full sequence is Protein X (154 aa).

The tract at residues 68 to 117 is mitochondrial targeting sequence; sequence PCALRFTSARRMETTVNAHQFLPKVLYKRTLGLSVMSTTDLEAYFKDCLF.

It belongs to the orthohepadnavirus protein X family. May form homodimer. May interact with host CEBPA, CFLAR, CREB1, DDB1, E4F1, HBXIP, HSPD1/HSP60, NFKBIA, POLR2E and SMAD4. Interacts with host SMC5-SMC6 complex and induces its degradation. Interacts with host TRPC4AP; leading to prevent ubiquitination of TRPC4AP. Interacts with host PLSCR1; this interaction promotes ubiquitination and degradation of HBx and impairs HBx-mediated cell proliferation. A fraction may be phosphorylated in insect cells and HepG2 cells, a human hepatoblastoma cell line. Phosphorylated in vitro by host protein kinase C or mitogen-activated protein kinase. N-acetylated in insect cells.

The protein resides in the host cytoplasm. It localises to the host nucleus. The protein localises to the host mitochondrion. Its function is as follows. Multifunctional protein that plays a role in silencing host antiviral defenses and promoting viral transcription. Does not seem to be essential for HBV infection. May be directly involved in development of cirrhosis and liver cancer (hepatocellular carcinoma). Most of cytosolic activities involve modulation of cytosolic calcium. The effect on apoptosis is controversial depending on the cell types in which the studies have been conducted. May induce apoptosis by localizing in mitochondria and causing loss of mitochondrial membrane potential. May also modulate apoptosis by binding host CFLAR, a key regulator of the death-inducing signaling complex (DISC). Promotes viral transcription by using the host E3 ubiquitin ligase DDB1 to target the SMC5-SMC6 complex to proteasomal degradation. This host complex would otherwise bind to viral episomal DNA, and prevents its transcription. Moderately stimulates transcription of many different viral and cellular transcription elements. Promoters and enhancers stimulated by HBx contain DNA binding sites for NF-kappa-B, AP-1, AP-2, c-EBP, ATF/CREB, or the calcium-activated factor NF-AT. The chain is Protein X from Homo sapiens (Human).